Consider the following 269-residue polypeptide: Undecaprenyl-diphosphatase (269 aa).

6 helical membrane-spanning segments follow: residues 43–63 (KGKVFEIVIQLGAILAVCWEY), 82–102 (FILNLFVAFLPAAIFGLLLHG), 108–128 (LFSSITVACALIVGGFAILLV), 188–208 (ATEFSFFLAIPVMLAATFYDV), 222–242 (MFAVGFITAFLAALVAIKTLI), and 249–269 (DFKGFAYYRIVLGIIVLAYYW).

It belongs to the UppP family.

It is found in the cell inner membrane. The enzyme catalyses di-trans,octa-cis-undecaprenyl diphosphate + H2O = di-trans,octa-cis-undecaprenyl phosphate + phosphate + H(+). In terms of biological role, catalyzes the dephosphorylation of undecaprenyl diphosphate (UPP). Confers resistance to bacitracin. This Methylobacillus flagellatus (strain ATCC 51484 / DSM 6875 / VKM B-1610 / KT) protein is Undecaprenyl-diphosphatase.